Reading from the N-terminus, the 440-residue chain is tRNA-2-methylthio-N(6)-dimethylallyladenosine synthase (440 aa).

One can recognise an MTTase N-terminal domain in the interval 2 to 117; sequence KGLYIKTYGC…LPELIVKASR (116 aa). [4Fe-4S] cluster-binding residues include Cys11, Cys47, Cys80, Cys157, Cys161, and Cys164. The Radical SAM core domain maps to 143 to 374; it reads NSQGSSAFLA…QELISKQQLE (232 aa). One can recognise a TRAM domain in the interval 377-440; the sequence is QSMIGKTIPV…RQNSLLGCAA (64 aa).

This sequence belongs to the methylthiotransferase family. MiaB subfamily. In terms of assembly, monomer. It depends on [4Fe-4S] cluster as a cofactor.

The protein resides in the cytoplasm. The enzyme catalyses N(6)-dimethylallyladenosine(37) in tRNA + (sulfur carrier)-SH + AH2 + 2 S-adenosyl-L-methionine = 2-methylsulfanyl-N(6)-dimethylallyladenosine(37) in tRNA + (sulfur carrier)-H + 5'-deoxyadenosine + L-methionine + A + S-adenosyl-L-homocysteine + 2 H(+). Functionally, catalyzes the methylthiolation of N6-(dimethylallyl)adenosine (i(6)A), leading to the formation of 2-methylthio-N6-(dimethylallyl)adenosine (ms(2)i(6)A) at position 37 in tRNAs that read codons beginning with uridine. The polypeptide is tRNA-2-methylthio-N(6)-dimethylallyladenosine synthase (Wolbachia pipientis subsp. Culex pipiens (strain wPip)).